We begin with the raw amino-acid sequence, 478 residues long: MVPGSPAAGAGPAPRALSLAARLSYAVGHFLNDLCASMWFTYLLLYLHSVRAYSSRGAGLLLLLGQVADGLCTPLVGYEADRAAGRCARCGPRKAWHLVGTVCVLLSFPFIFSPCLGCGAATPEWAALLYYGPFIVVFQFGWAATQIAHLSLIPELVTSDHEKVELTALRYAFTVVANITVFGAAWLLLRLQGSAREGPPDEAGDHLGVQDVPVFRTLSLCVVGVGAVFSLLFHLGTRERRRPPAQEPDERSPLLAPATARPLLLWKHWLREPSFYQVGLLYMSTRLIVNLSQTYIAMYLTYSLNLPKKFIATIPLVMYVSGFCSSFLMKPVNKCIGRNMTYFVGLLVILAFAAWVVLVDELGMAVYVAAVLLGGGCATILVTSLAMTADLIGPHTHSGAFVYGAMSFSDKVANGLAVMVIQSLHPCSLELCCRACVGFYHWVMVAVTGGVGVAATLSLCSLLVWPIRLRSWDPGAQP.

Residue Met-1 is modified to N-acetylmethionine. The Cytoplasmic portion of the chain corresponds to 1–26; sequence MVPGSPAAGAGPAPRALSLAARLSYA. A helical membrane pass occupies residues 27–47; that stretch reads VGHFLNDLCASMWFTYLLLYL. The Lumenal segment spans residues 48–56; sequence HSVRAYSSR. The chain crosses the membrane as a helical span at residues 57 to 77; it reads GAGLLLLLGQVADGLCTPLVG. Residues 78–97 are Cytoplasmic-facing; the sequence is YEADRAAGRCARCGPRKAWH. A helical membrane pass occupies residues 98–118; sequence LVGTVCVLLSFPFIFSPCLGC. Topologically, residues 119–124 are lumenal; that stretch reads GAATPE. A helical transmembrane segment spans residues 125-145; sequence WAALLYYGPFIVVFQFGWAAT. The Cytoplasmic portion of the chain corresponds to 146 to 168; that stretch reads QIAHLSLIPELVTSDHEKVELTA. The helical transmembrane segment at 169–189 threads the bilayer; it reads LRYAFTVVANITVFGAAWLLL. Topologically, residues 190–216 are lumenal; sequence RLQGSAREGPPDEAGDHLGVQDVPVFR. The helical transmembrane segment at 217–237 threads the bilayer; that stretch reads TLSLCVVGVGAVFSLLFHLGT. The Cytoplasmic segment spans residues 238-277; sequence RERRRPPAQEPDERSPLLAPATARPLLLWKHWLREPSFYQ. Residues 278 to 300 form a helical membrane-spanning segment; sequence VGLLYMSTRLIVNLSQTYIAMYL. Residues 301-308 are Lumenal-facing; that stretch reads TYSLNLPK. The helical transmembrane segment at 309-329 threads the bilayer; it reads KFIATIPLVMYVSGFCSSFLM. The Cytoplasmic portion of the chain corresponds to 330 to 338; it reads KPVNKCIGR. A helical transmembrane segment spans residues 339 to 359; that stretch reads NMTYFVGLLVILAFAAWVVLV. Residues 360 to 361 lie on the Lumenal side of the membrane; the sequence is DE. Residues 362–382 traverse the membrane as a helical segment; it reads LGMAVYVAAVLLGGGCATILV. At 383–400 the chain is on the cytoplasmic side; the sequence is TSLAMTADLIGPHTHSGA. The helical transmembrane segment at 401 to 421 threads the bilayer; the sequence is FVYGAMSFSDKVANGLAVMVI. Topologically, residues 422–436 are lumenal; it reads QSLHPCSLELCCRAC. A helical membrane pass occupies residues 437–457; the sequence is VGFYHWVMVAVTGGVGVAATL. The Cytoplasmic segment spans residues 458–478; it reads SLCSLLVWPIRLRSWDPGAQP.

The protein belongs to the major facilitator superfamily.

It localises to the melanosome membrane. The protein localises to the lysosome membrane. The enzyme catalyses L-cysteine(in) = L-cysteine(out). Transporter that mediates the import of cysteine into melanosomes, thereby regulating skin/hair pigmentation. In melanosomes, cysteine import is required both for normal levels of cystine, the oxidized dimer of cysteine, and provide cysteine for the production of the cysteinyldopas used in pheomelanin synthesis, thereby regulating skin/hair pigmentation. Also catalyzes import of cysteine into lysosomes in non-pigmented cells, regulating lysosomal cystine and cysteine storage, which is essnetial for redox homeostasis. This Equus caballus (Horse) protein is Major facilitator superfamily domain-containing protein 12.